Reading from the N-terminus, the 95-residue chain is Protein TusB (95 aa).

Belongs to the DsrH/TusB family. Heterohexamer, formed by a dimer of trimers. The hexameric TusBCD complex contains 2 copies each of TusB, TusC and TusD. The TusBCD complex interacts with TusE.

The protein resides in the cytoplasm. Functionally, part of a sulfur-relay system required for 2-thiolation of 5-methylaminomethyl-2-thiouridine (mnm(5)s(2)U) at tRNA wobble positions. In Yersinia pseudotuberculosis serotype O:1b (strain IP 31758), this protein is Protein TusB.